Consider the following 473-residue polypeptide: Photosystem II CP43 reaction center protein (473 aa).

Residues methionine 1–glutamate 14 constitute a propeptide that is removed on maturation. Threonine 15 carries the N-acetylthreonine modification. Threonine 15 bears the Phosphothreonine mark. The next 5 membrane-spanning stretches (helical) occupy residues leucine 69–alanine 93, leucine 134–asparagine 155, lysine 178–threonine 200, lysine 255–serine 275, and tryptophan 291–alanine 312. Glutamate 367 is a binding site for [CaMn4O5] cluster. The chain crosses the membrane as a helical span at residues arginine 447 to proline 471.

The protein belongs to the PsbB/PsbC family. PsbC subfamily. PSII is composed of 1 copy each of membrane proteins PsbA, PsbB, PsbC, PsbD, PsbE, PsbF, PsbH, PsbI, PsbJ, PsbK, PsbL, PsbM, PsbT, PsbX, PsbY, PsbZ, Psb30/Ycf12, at least 3 peripheral proteins of the oxygen-evolving complex and a large number of cofactors. It forms dimeric complexes. Binds multiple chlorophylls and provides some of the ligands for the Ca-4Mn-5O cluster of the oxygen-evolving complex. It may also provide a ligand for a Cl- that is required for oxygen evolution. PSII binds additional chlorophylls, carotenoids and specific lipids. serves as cofactor.

The protein localises to the plastid. It is found in the chloroplast thylakoid membrane. Its function is as follows. One of the components of the core complex of photosystem II (PSII). It binds chlorophyll and helps catalyze the primary light-induced photochemical processes of PSII. PSII is a light-driven water:plastoquinone oxidoreductase, using light energy to abstract electrons from H(2)O, generating O(2) and a proton gradient subsequently used for ATP formation. The sequence is that of Photosystem II CP43 reaction center protein from Crucihimalaya wallichii (Rock-cress).